The primary structure comprises 406 residues: Phosphatidylinositol 5-phosphate 4-kinase type-2 alpha (406 aa).

Ala-2 carries the post-translational modification N-acetylalanine. Thr-3 is modified (phosphothreonine). Position 14 is a phosphoserine (Ser-14). The PIPK domain maps to 33-405 (ASDPLLSVLM…RFLDFIGHIL (373 aa)). A required for interaction with PIP5K1A region spans residues 59 to 65 (VMLMPDD). N6-acetyllysine occurs at positions 89 and 145. The disordered stretch occupies residues 287–328 (EQEEVECEENEGEEEGESDGAHPIGTPPDSPGNTLNSSPPLA). Over residues 289–304 (EEVECEENEGEEEGES) the composition is skewed to acidic residues.

In terms of assembly, homodimer. Interacts with PIP4K2B; the interaction may regulate localization to the nucleus. Probably interacts with PIP5K1A; the interaction inhibits PIP5K1A kinase activity. In terms of processing, phosphorylated in tyrosines. Phosphorylation is induced by light and increases kinase activity.

The protein localises to the cell membrane. Its subcellular location is the nucleus. It localises to the lysosome. It is found in the cytoplasm. The protein resides in the photoreceptor inner segment. The protein localises to the cell projection. Its subcellular location is the cilium. It localises to the photoreceptor outer segment. It carries out the reaction a 1,2-diacyl-sn-glycero-3-phospho-(1D-myo-inositol-5-phosphate) + ATP = a 1,2-diacyl-sn-glycero-3-phospho-(1D-myo-inositol-4,5-bisphosphate) + ADP + H(+). It catalyses the reaction 1,2-dihexadecanoyl-sn-glycero-3-phospho-(1D-myo-inositol-5-phosphate) + ATP = 1,2-dihexadecanoyl-sn-glycero-3-phospho-(1D-myo-inositol-4,5-bisphosphate) + ADP + H(+). The enzyme catalyses 1,2-dihexadecanoyl-sn-glycero-3-phospho-(1D-myo-inositol-5-phosphate) + GTP = 1,2-dihexadecanoyl-sn-glycero-3-phospho-(1D-myo-inositol-4,5-bisphosphate) + GDP + H(+). With respect to regulation, in rod outer segments, activated by light. Its function is as follows. Catalyzes the phosphorylation of phosphatidylinositol 5-phosphate (PtdIns5P) on the fourth hydroxyl of the myo-inositol ring, to form phosphatidylinositol 4,5-bisphosphate (PtdIns(4,5)P2). Has both ATP- and GTP-dependent kinase activities. May exert its function by regulating the levels of PtdIns5P, which functions in the cytosol by increasing AKT activity and in the nucleus signals through ING2. May regulate the pool of cytosolic PtdIns5P in response to the activation of tyrosine phosphorylation. Required for lysosome-peroxisome membrane contacts and intracellular cholesterol transport through modulating peroxisomal PtdIns(4,5)P2 level. In collaboration with PIP4K2B, has a role in mediating autophagy in times of nutrient stress. Required for autophagosome-lysosome fusion and the regulation of cellular lipid metabolism. Negatively regulates insulin signaling through a catalytic-independent mechanism. PIP4Ks interact with PIP5Ks and suppress PIP5K-mediated PtdIns(4,5)P2 synthesis and insulin-dependent conversion to PtdIns(3,4,5)P3. May be involved in thrombopoiesis, and the terminal maturation of megakaryocytes and regulation of their size. The chain is Phosphatidylinositol 5-phosphate 4-kinase type-2 alpha from Rattus norvegicus (Rat).